Here is a 267-residue protein sequence, read N- to C-terminus: MTHRIAFIGLGAIASDVAAGLLADAAQPCQLAALTRNAADLPPALAGRVALLDGLPGLLAWRPDLVVEAAGQQAIAEHAEGCLRAGLDMIICSAGALADDALRARLIAAAEAGGARIRVPAGAIAGLDYLQAVAGRDDAEVVYESRKPVAAWRAELPGMGIDPDTLAESRTLFSGPAREAALRFPKNLNVAATLALAGIGMTRTRVEVVVDPRARGNQHRIQVRSPLGEMQIELVNAPSPANPKTSWLVAQSVLATIRRHLARFTIG.

Positions 123 and 189 each coordinate NAD(+). Residue His219 is part of the active site.

Belongs to the L-aspartate dehydrogenase family.

The enzyme catalyses L-aspartate + NADP(+) + H2O = oxaloacetate + NH4(+) + NADPH + H(+). It carries out the reaction L-aspartate + NAD(+) + H2O = oxaloacetate + NH4(+) + NADH + H(+). The protein operates within cofactor biosynthesis; NAD(+) biosynthesis; iminoaspartate from L-aspartate (dehydrogenase route): step 1/1. Its function is as follows. Specifically catalyzes the NAD or NADP-dependent dehydrogenation of L-aspartate to iminoaspartate. The chain is L-aspartate dehydrogenase 2 from Bordetella bronchiseptica (strain ATCC BAA-588 / NCTC 13252 / RB50) (Alcaligenes bronchisepticus).